We begin with the raw amino-acid sequence, 476 residues long: Glycogen synthase (476 aa).

Lys15 provides a ligand contact to ADP-alpha-D-glucose.

The protein belongs to the glycosyltransferase 1 family. Bacterial/plant glycogen synthase subfamily.

The catalysed reaction is [(1-&gt;4)-alpha-D-glucosyl](n) + ADP-alpha-D-glucose = [(1-&gt;4)-alpha-D-glucosyl](n+1) + ADP + H(+). It functions in the pathway glycan biosynthesis; glycogen biosynthesis. In terms of biological role, synthesizes alpha-1,4-glucan chains using ADP-glucose. This is Glycogen synthase from Lactobacillus acidophilus (strain ATCC 700396 / NCK56 / N2 / NCFM).